The primary structure comprises 179 residues: Acireductone dioxygenase (179 aa).

His88, His90, Glu94, and His133 together coordinate Fe(2+). Residues His88, His90, Glu94, and His133 each coordinate Ni(2+).

The protein belongs to the acireductone dioxygenase (ARD) family. As to quaternary structure, monomer. Interacts with MMP14. It depends on Fe(2+) as a cofactor. The cofactor is Ni(2+).

Its subcellular location is the cytoplasm. It is found in the nucleus. The protein resides in the cell membrane. The catalysed reaction is 1,2-dihydroxy-5-(methylsulfanyl)pent-1-en-3-one + O2 = 4-methylsulfanyl-2-oxobutanoate + formate + 2 H(+). It carries out the reaction 1,2-dihydroxy-5-(methylsulfanyl)pent-1-en-3-one + O2 = 3-(methylsulfanyl)propanoate + CO + formate + 2 H(+). It participates in amino-acid biosynthesis; L-methionine biosynthesis via salvage pathway; L-methionine from S-methyl-5-thio-alpha-D-ribose 1-phosphate: step 5/6. In terms of biological role, catalyzes 2 different reactions between oxygen and the acireductone 1,2-dihydroxy-3-keto-5-methylthiopentene (DHK-MTPene) depending upon the metal bound in the active site. Fe-containing acireductone dioxygenase (Fe-ARD) produces formate and 2-keto-4-methylthiobutyrate (KMTB), the alpha-ketoacid precursor of methionine in the methionine recycle pathway. Ni-containing acireductone dioxygenase (Ni-ARD) produces methylthiopropionate, carbon monoxide and formate, and does not lie on the methionine recycle pathway. Also down-regulates cell migration mediated by MMP14. The chain is Acireductone dioxygenase from Macaca mulatta (Rhesus macaque).